Reading from the N-terminus, the 761-residue chain is NADP-dependent malic enzyme (761 aa).

The tract at residues 1–437 (MPGIDKTDRA…QLSARRDPIA (437 aa)) is malic enzyme. The active-site Proton donor is tyrosine 49. The active-site Proton acceptor is lysine 104. Residues glutamate 146, aspartate 147, and aspartate 172 each contribute to the a divalent metal cation site. Residues 205–208 (AGAA), asparagine 297, and asparagine 329 contribute to the NADP(+) site. The tract at residues 438–761 (STLQRIVERV…AAIAAYNAGT (324 aa)) is phosphate acetyltransferase.

In the N-terminal section; belongs to the malic enzymes family. It in the C-terminal section; belongs to the phosphate acetyltransferase and butyryltransferase family. In terms of assembly, homooctamer. The cofactor is Mg(2+). Mn(2+) is required as a cofactor.

It carries out the reaction (S)-malate + NADP(+) = pyruvate + CO2 + NADPH. The enzyme catalyses oxaloacetate + H(+) = pyruvate + CO2. The polypeptide is NADP-dependent malic enzyme (tme) (Rhizobium meliloti (strain 1021) (Ensifer meliloti)).